A 971-amino-acid polypeptide reads, in one-letter code: GEM-interacting protein (971 aa).

A Phosphoserine modification is found at Ser-19. Disordered stretches follow at residues 41 to 79, 231 to 267, and 383 to 476; these read AGDP…PEGP, LRAR…AQAK, and DTKK…IENG. The segment covering 44-56 has biased composition (basic and acidic residues); it reads PVRREDLEPDKAD. A compositionally biased stretch (polar residues) spans 59–69; that stretch reads TVVTEENSEAS. A phosphoserine mark is found at Ser-75, Ser-235, Ser-238, Ser-247, Ser-436, and Ser-440. One can recognise an F-BAR domain in the interval 85–348; the sequence is EELDLRLIRT…CCVPFEPGQR (264 aa). The span at 458–471 shows a compositional bias: acidic residues; sequence SSDDFEERDPDLGD. The segment at 492 to 536 adopts a Phorbol-ester/DAG-type zinc-finger fold; sequence THRLRRLRGPAKCRECEAFMVSGTECEECFLTCHKRCLETLLILC. Residues 553–756 enclose the Rho-GAP domain; it reads LQLPRDFPEE…FLIVHYEQIF (204 aa). The residue at position 659 (Thr-659) is a Phosphothreonine. The disordered stretch occupies residues 799-865; it reads IALDSSPDPK…LGAQSRGHFS (67 aa). Over residues 805-817 the composition is skewed to basic and acidic residues; it reads PDPKHHSALEKCP. Phosphoserine is present on residues Ser-884, Ser-908, and Ser-924.

In terms of assembly, interacts with GEM through its N-terminal.

Functionally, stimulates, in vitro and in vivo, the GTPase activity of RhoA. The polypeptide is GEM-interacting protein (Gmip) (Mus musculus (Mouse)).